Here is a 236-residue protein sequence, read N- to C-terminus: Small ribosomal subunit protein uS2c (236 aa).

This sequence belongs to the universal ribosomal protein uS2 family.

Its subcellular location is the plastid. It is found in the chloroplast. This Oenothera biennis (German evening primrose) protein is Small ribosomal subunit protein uS2c (rps2).